The sequence spans 284 residues: 2-dehydro-3-deoxyphosphooctonate aldolase (284 aa).

The protein belongs to the KdsA family.

The protein resides in the cytoplasm. It carries out the reaction D-arabinose 5-phosphate + phosphoenolpyruvate + H2O = 3-deoxy-alpha-D-manno-2-octulosonate-8-phosphate + phosphate. It participates in carbohydrate biosynthesis; 3-deoxy-D-manno-octulosonate biosynthesis; 3-deoxy-D-manno-octulosonate from D-ribulose 5-phosphate: step 2/3. Its pathway is bacterial outer membrane biogenesis; lipopolysaccharide biosynthesis. This is 2-dehydro-3-deoxyphosphooctonate aldolase from Edwardsiella ictaluri (strain 93-146).